Here is a 310-residue protein sequence, read N- to C-terminus: ER-derived vesicles protein ERV29 (310 aa).

The Cytoplasmic portion of the chain corresponds to 1–108 (MSYRGPIGNF…YLNKWKHYPY (108 aa)). The tract at residues 11–31 (GGMPMSSSQGPYSGGAQFRSN) is disordered. Residues 109–129 (FFVVVFLVVVTVSMLIGASLL) traverse the membrane as a helical segment. Over 130 to 137 (VLRKQTNY) the chain is Lumenal. A helical transmembrane segment spans residues 138–158 (ATGVLCACVISQALVYGLFTG). Topologically, residues 159–209 (SSFVLRNFSVIGGLLIAFSDSIVQNKTTFGMLPELNSKNDKAKGYLLFAGR) are cytoplasmic. The chain crosses the membrane as a helical span at residues 210–230 (ILIVLMFIAFTFSKSWFTVVL). Over 231–245 (TIIGTICFAIGYKTK) the chain is Lumenal. A helical transmembrane segment spans residues 246-266 (FASIMLGLILTFYNITLNNYW). Over 267–310 (FYNNTKRDFLKYEFYQNLSIIGGLLLVTNTGAGELSVDEKKKIY) the chain is Cytoplasmic. A Di-lysine motif motif is present at residues 307–310 (KKIY).

Belongs to the SURF4 family.

It localises to the endoplasmic reticulum membrane. Constituent of COPII-coated endoplasmic reticulum-derived transport vesicles. Required for efficient transport of a subset of secretory proteins to the Golgi. The C-terminal di-lysine motif is required for exit from the endoplasmic reticulum. Required directly for packaging glycosylated pro-alpha-factor into COPII vesicles. Facilitates retrograde transport from the Golgi to the endoplasmic reticulum. The sequence is that of ER-derived vesicles protein ERV29 (ERV29) from Saccharomyces cerevisiae (strain ATCC 204508 / S288c) (Baker's yeast).